Reading from the N-terminus, the 206-residue chain is Enterobactin synthase component D (206 aa).

Mg(2+) is bound by residues D107, E109, and E152.

This sequence belongs to the P-Pant transferase superfamily. EntD family. EntB, EntD, EntE, and EntF form a multienzyme complex called enterobactin synthase. Requires Mg(2+) as cofactor.

It is found in the membrane. The catalysed reaction is apo-[aryl-carrier protein] + CoA = holo-[aryl-carrier protein] + adenosine 3',5'-bisphosphate + H(+). It catalyses the reaction apo-[peptidyl-carrier protein] + CoA = holo-[peptidyl-carrier protein] + adenosine 3',5'-bisphosphate + H(+). The protein operates within siderophore biosynthesis; enterobactin biosynthesis. Its function is as follows. Involved in the biosynthesis of the siderophore enterobactin (enterochelin), which is a macrocyclic trimeric lactone of N-(2,3-dihydroxybenzoyl)-serine. The serine trilactone serves as a scaffolding for the three catechol functionalities that provide hexadentate coordination for the tightly ligated iron(2+) atoms. Plays an essential role in the assembly of the enterobactin by catalyzing the transfer of the 4'-phosphopantetheine (Ppant) moiety from coenzyme A to the apo-domains of both EntB (ArCP domain) and EntF (PCP domain) to yield their holo-forms which make them competent for the activation of 2,3-dihydroxybenzoate (DHB) and L-serine, respectively. In Escherichia coli O157:H7, this protein is Enterobactin synthase component D.